The primary structure comprises 254 residues: Uracil-DNA glycosylase (254 aa).

The active-site Proton acceptor is the D91.

It belongs to the uracil-DNA glycosylase (UDG) superfamily. UNG family.

Its subcellular location is the host nucleus. The catalysed reaction is Hydrolyzes single-stranded DNA or mismatched double-stranded DNA and polynucleotides, releasing free uracil.. Its function is as follows. Excises uracil residues from the DNA which can arise as a result of misincorporation of dUMP residues by DNA polymerase or deamination of cytosines. Therefore may reduce deleterious uracil incorporation into the viral genome, particularly in terminally differentiated cells which lack DNA repair enzymes. In Homo sapiens (Human), this protein is Uracil-DNA glycosylase (U81).